The sequence spans 135 residues: uncharacterized protein (135 aa).

A run of 2 helical transmembrane segments spans residues 20-40 (IFSFVFDIFLFIFDVIWNTKL) and 47-67 (IAYFLVFFMVIKLSIYAIHGT).

This sequence belongs to the plectrovirus ORF5 family.

The protein localises to the host membrane. This is an uncharacterized protein from Spiroplasma virus SpV1-C74 (SpV1).